Reading from the N-terminus, the 424-residue chain is Interferon regulatory factor 8 (424 aa).

The IRF tryptophan pentad repeat DNA-binding region spans 7–114 (GRRLRQWLIE…EPYKVYRIVP (108 aa)).

This sequence belongs to the IRF family. As to quaternary structure, interacts with COPS2. Interacts (via C-terminus) with TRIM21 (via C-terminus). Interacts with the BATF-JUNB heterodimer. Interacts with BATF (via bZIP domain); the interaction is direct. Interacts with SPI1. In terms of processing, ubiquitinated. Ubiquitination by TRIM21 in macrophages, a process that is strongly increased upon interferon gamma stimulation, leds to the enhanced transcriptional activity of target cytokine genes. Ubiquitination leads to its degradation by the proteasome. Post-translationally, sumoylated with SUMO3. Desumoylated by SENP1. In terms of tissue distribution, expressed in bone marrow macrophages (at protein level). Mainly expressed in lymphoid tissues. Predominantly expressed in CD8(+)-expressing dendritic cells.

The protein resides in the nucleus. It is found in the cytoplasm. Its function is as follows. Transcription factor that specifically binds to the upstream regulatory region of type I interferon (IFN) and IFN-inducible MHC class I genes (the interferon consensus sequence (ICS)). Can both act as a transcriptional activator or repressor. Plays a negative regulatory role in cells of the immune system. Involved in CD8(+) dendritic cell differentiation by forming a complex with the BATF-JUNB heterodimer in immune cells, leading to recognition of AICE sequence (5'-TGAnTCA/GAAA-3'), an immune-specific regulatory element, followed by cooperative binding of BATF and IRF8 and activation of genes. Required for the development of plasmacytoid dendritic cells (pDCs), which produce most of the type I IFN in response to viral infection. Positively regulates macroautophagy in dendritic cells. Acts as a transcriptional repressor of osteoclast differentiation factors such as NFATC1 and EEIG1. The sequence is that of Interferon regulatory factor 8 from Mus musculus (Mouse).